The chain runs to 315 residues: Petrobactin import system permease protein YclO (315 aa).

9 consecutive transmembrane segments (helical) span residues 7 to 27 (IALL…YDLG), 40 to 60 (VAAI…FQTI), 76 to 96 (LYML…MVIM), 100 to 120 (INFI…YQIM), 128 to 148 (IFFL…LSSF), 172 to 192 (INTD…VYVW), 223 to 243 (LIVV…IMFL), 262 to 282 (YLIA…QFVV), and 288 to 308 (FSTT…IYLL).

It belongs to the binding-protein-dependent transport system permease family. FecCD subfamily. As to quaternary structure, the complex is composed of two ATP-binding proteins (YclP), two transmembrane proteins (YclN and YclO) and a solute-binding protein (YclQ).

It localises to the cell membrane. Its function is as follows. Part of the ABC transporter complex YclNOPQ involved in uptake of ferric-petrobactin. Petrobactin is a photoreactive 3,4-catecholate siderophore produced by many members of the B.cereus group, including B.anthracis. Probably responsible for the translocation of the substrate across the membrane. In Bacillus subtilis (strain 168), this protein is Petrobactin import system permease protein YclO (yclO).